The following is a 369-amino-acid chain: Glutamate 5-kinase (369 aa).

Lys11 provides a ligand contact to ATP. Residues Ser51, Asp138, and Asn150 each contribute to the substrate site. ATP-binding positions include 170–171 and 212–218; these read TD and TGGMATK. The PUA domain occupies 277 to 355; that stretch reads KGSIVIDEGA…QDIYAVLGYE (79 aa).

This sequence belongs to the glutamate 5-kinase family.

Its subcellular location is the cytoplasm. The catalysed reaction is L-glutamate + ATP = L-glutamyl 5-phosphate + ADP. It functions in the pathway amino-acid biosynthesis; L-proline biosynthesis; L-glutamate 5-semialdehyde from L-glutamate: step 1/2. Its function is as follows. Catalyzes the transfer of a phosphate group to glutamate to form L-glutamate 5-phosphate. The chain is Glutamate 5-kinase from Aliivibrio fischeri (strain ATCC 700601 / ES114) (Vibrio fischeri).